A 645-amino-acid polypeptide reads, in one-letter code: Translation factor GUF1, mitochondrial (645 aa).

Positions 44–228 constitute a tr-type G domain; sequence ENYRNFSIVA…AIIDRIPPPT (185 aa). Residues 53–60, 120–124, and 174–177 contribute to the GTP site; these read AHVDHGKS, DTPGH, and NKID.

Belongs to the TRAFAC class translation factor GTPase superfamily. Classic translation factor GTPase family. LepA subfamily.

It localises to the mitochondrion inner membrane. It catalyses the reaction GTP + H2O = GDP + phosphate + H(+). Its function is as follows. Promotes mitochondrial protein synthesis. May act as a fidelity factor of the translation reaction, by catalyzing a one-codon backward translocation of tRNAs on improperly translocated ribosomes. Binds to mitochondrial ribosomes in a GTP-dependent manner. The polypeptide is Translation factor GUF1, mitochondrial (Saccharomyces cerevisiae (strain ATCC 204508 / S288c) (Baker's yeast)).